We begin with the raw amino-acid sequence, 394 residues long: GDSL esterase/lipase At1g31550 (394 aa).

The N-terminal stretch at M1–S27 is a signal peptide. S43 functions as the Nucleophile in the catalytic mechanism. N-linked (GlcNAc...) asparagine glycosylation is found at N138, N290, and N322. Active-site residues include D345 and H348.

The protein belongs to the 'GDSL' lipolytic enzyme family.

Its subcellular location is the secreted. This is GDSL esterase/lipase At1g31550 from Arabidopsis thaliana (Mouse-ear cress).